We begin with the raw amino-acid sequence, 81 residues long: Acyl carrier protein (81 aa).

The Carrier domain occupies 5 to 80 (EEIFSKVKSI…DIVSYIEKKL (76 aa)). The residue at position 40 (Ser40) is an O-(pantetheine 4'-phosphoryl)serine.

This sequence belongs to the acyl carrier protein (ACP) family. Post-translationally, 4'-phosphopantetheine is transferred from CoA to a specific serine of apo-ACP by AcpS. This modification is essential for activity because fatty acids are bound in thioester linkage to the sulfhydryl of the prosthetic group.

It localises to the cytoplasm. Its pathway is lipid metabolism; fatty acid biosynthesis. Functionally, carrier of the growing fatty acid chain in fatty acid biosynthesis. This chain is Acyl carrier protein, found in Thermotoga maritima (strain ATCC 43589 / DSM 3109 / JCM 10099 / NBRC 100826 / MSB8).